The primary structure comprises 199 residues: Pyridoxine/pyridoxamine 5'-phosphate oxidase (199 aa).

FMN-binding positions include 45–50 (RVVLLK), 60–61 (FT), Arg66, Lys67, and Gln89. Residue Lys50 participates in substrate binding. Substrate-binding residues include Tyr107, Arg111, and Ser115. FMN-binding positions include 124–125 (QS) and Trp169. A substrate-binding site is contributed by 175-177 (RIH). An FMN-binding site is contributed by Arg179.

Belongs to the pyridoxamine 5'-phosphate oxidase family. As to quaternary structure, homodimer. It depends on FMN as a cofactor.

The catalysed reaction is pyridoxamine 5'-phosphate + O2 + H2O = pyridoxal 5'-phosphate + H2O2 + NH4(+). It catalyses the reaction pyridoxine 5'-phosphate + O2 = pyridoxal 5'-phosphate + H2O2. The protein operates within cofactor metabolism; pyridoxal 5'-phosphate salvage; pyridoxal 5'-phosphate from pyridoxamine 5'-phosphate: step 1/1. It participates in cofactor metabolism; pyridoxal 5'-phosphate salvage; pyridoxal 5'-phosphate from pyridoxine 5'-phosphate: step 1/1. In terms of biological role, catalyzes the oxidation of either pyridoxine 5'-phosphate (PNP) or pyridoxamine 5'-phosphate (PMP) into pyridoxal 5'-phosphate (PLP). This chain is Pyridoxine/pyridoxamine 5'-phosphate oxidase, found in Ehrlichia chaffeensis (strain ATCC CRL-10679 / Arkansas).